We begin with the raw amino-acid sequence, 208 residues long: N-(5'-phosphoribosyl)anthranilate isomerase (208 aa).

It belongs to the TrpF family.

It carries out the reaction N-(5-phospho-beta-D-ribosyl)anthranilate = 1-(2-carboxyphenylamino)-1-deoxy-D-ribulose 5-phosphate. It functions in the pathway amino-acid biosynthesis; L-tryptophan biosynthesis; L-tryptophan from chorismate: step 3/5. This chain is N-(5'-phosphoribosyl)anthranilate isomerase, found in Methanococcus maripaludis (strain C7 / ATCC BAA-1331).